The primary structure comprises 588 residues: Protein cereblon (588 aa).

Disordered stretches follow at residues 1-107 (MDDE…DDSD) and 159-197 (QERR…DIGF). Polar residues predominate over residues 41–50 (AWNNATQDEQ). A compositionally biased stretch (acidic residues) spans 75-85 (MVEDVLQDDTA). A compositionally biased stretch (polar residues) spans 86–96 (SEGSHPSSDMS). A compositionally biased stretch (basic and acidic residues) spans 159–168 (QERRRSRTSE). A compositionally biased stretch (pro residues) spans 181–192 (NDPPPQQPPRPP). Residues 228–454 (HMLIFLHQHI…LIKSTFKDES (227 aa)) enclose the Lon N-terminal domain. The CULT domain maps to 453–562 (ESLFFCRYCN…LAGSSVRIGK (110 aa)). Zn(2+)-binding residues include C458, C461, C527, and C530.

It belongs to the CRBN family. As to quaternary structure, likely a component of a DCX (DDB1-CUL4-X-box) protein ligase complex. May interact with pic/DDB1. Ubiquitinated.

It localises to the nucleus. The protein operates within protein modification; protein ubiquitination. Substrate recognition component of a DCX (DDB1-CUL4-X-box) E3 protein ligase complex that mediates the ubiquitination and subsequent proteasomal degradation of target proteins. Has an essential role in mediating growth by negatively regulating insulin signaling. It also has a role in maintaining presynaptic function in the neuromuscular junction synapses of third-instar larvae. The sequence is that of Protein cereblon from Drosophila yakuba (Fruit fly).